Reading from the N-terminus, the 93-residue chain is UPF0728 protein C10orf53 homolog (93 aa).

It belongs to the UPF0728 family.

The protein is UPF0728 protein C10orf53 homolog of Bos taurus (Bovine).